A 260-amino-acid polypeptide reads, in one-letter code: MGYLKRFALYISILVLIVMVAGCGKSDETKEDSKEEQIKKSFAKTLDMYPIKNLQDLYDKEGYRDGEFKKGDKGTWTLLTSFAKSNKPGEIDDEGMVLFLNRNTKKATGYYYISKVHDEFNEKEHQKNIMLNLKIIKIVLLDNVEDEKLKQKIENFKFLSQYADFKDLKNYQDGSITTNENVPSYEAEFKLNNSDENVKKLREVYPITTKKSPVLKLHIDGDIKGSSIGYKNIEFNFSKVKDEETAVRDFVNFGPSDENS.

The first 22 residues, 1–22, serve as a signal peptide directing secretion; that stretch reads MGYLKRFALYISILVLIVMVAG. Cys-23 carries the N-palmitoyl cysteine lipid modification. Cys-23 is lipidated: S-diacylglycerol cysteine.

Belongs to the staphylococcal tandem lipoprotein family.

Its subcellular location is the cell membrane. This is an uncharacterized protein from Staphylococcus aureus (strain bovine RF122 / ET3-1).